Reading from the N-terminus, the 237-residue chain is Ribosomal RNA small subunit methyltransferase G (237 aa).

S-adenosyl-L-methionine-binding positions include Gly78, Phe83, 129–130 (AE), and Arg148. Residues 218–237 (KKETPNKYPRKAGMPNKRPL) are disordered.

This sequence belongs to the methyltransferase superfamily. RNA methyltransferase RsmG family.

The protein localises to the cytoplasm. Its function is as follows. Specifically methylates the N7 position of a guanine in 16S rRNA. The polypeptide is Ribosomal RNA small subunit methyltransferase G (Streptococcus sanguinis (strain SK36)).